The following is a 158-amino-acid chain: 6,7-dimethyl-8-ribityllumazine synthase (158 aa).

5-amino-6-(D-ribitylamino)uracil contacts are provided by residues Phe22, 57-59 (AYE), and 81-83 (AVI). Residue 86 to 87 (GT) coordinates (2S)-2-hydroxy-3-oxobutyl phosphate. His89 (proton donor) is an active-site residue. Position 114 (Phe114) interacts with 5-amino-6-(D-ribitylamino)uracil. Arg128 serves as a coordination point for (2S)-2-hydroxy-3-oxobutyl phosphate.

The protein belongs to the DMRL synthase family. In terms of assembly, forms an icosahedral capsid composed of 60 subunits, arranged as a dodecamer of pentamers.

The catalysed reaction is (2S)-2-hydroxy-3-oxobutyl phosphate + 5-amino-6-(D-ribitylamino)uracil = 6,7-dimethyl-8-(1-D-ribityl)lumazine + phosphate + 2 H2O + H(+). Its pathway is cofactor biosynthesis; riboflavin biosynthesis; riboflavin from 2-hydroxy-3-oxobutyl phosphate and 5-amino-6-(D-ribitylamino)uracil: step 1/2. In terms of biological role, catalyzes the formation of 6,7-dimethyl-8-ribityllumazine by condensation of 5-amino-6-(D-ribitylamino)uracil with 3,4-dihydroxy-2-butanone 4-phosphate. This is the penultimate step in the biosynthesis of riboflavin. This Pseudoalteromonas atlantica (strain T6c / ATCC BAA-1087) protein is 6,7-dimethyl-8-ribityllumazine synthase.